We begin with the raw amino-acid sequence, 617 residues long: Electron transfer flavoprotein-ubiquinone oxidoreductase, mitochondrial (617 aa).

A mitochondrion-targeting transit peptide spans 1 to 33 (MQVLLARLACPVYQCFHAIKIKKNYLPLCATRW). 71–85 (VVIVGAGPAGLSAAA) provides a ligand contact to FAD. K96 bears the N6-acetyllysine mark. An intramembrane segment occupies 109–130 (IGAHTLSGACLDPRALQELFPD). N6-acetyllysine occurs at positions 132 and 223. A ubiquinone is bound by residues G305 and G306. K357 carries the post-translational modification N6-acetyllysine. The stretch at 428–447 (IGLDVTEYEDNLKKSWVWKE) is an intramembrane region. Residue S551 is modified to Phosphoserine. 4 residues coordinate [4Fe-4S] cluster: C561, C586, C589, and C592. One can recognise a 4Fe-4S ferredoxin-type domain in the interval 577–606 (FRLQINAQNCVHCKTCDIKDPSQNINWVVP).

Belongs to the ETF-QO/FixC family. As to quaternary structure, monomer. Requires [4Fe-4S] cluster as cofactor. The cofactor is FAD.

Its subcellular location is the mitochondrion inner membrane. It catalyses the reaction a ubiquinone + reduced [electron-transfer flavoprotein] = a ubiquinol + oxidized [electron-transfer flavoprotein] + H(+). Its function is as follows. Accepts electrons from ETF and reduces ubiquinone. The sequence is that of Electron transfer flavoprotein-ubiquinone oxidoreductase, mitochondrial (ETFDH) from Bos taurus (Bovine).